The primary structure comprises 377 residues: 23S rRNA (uracil(747)-C(5))-methyltransferase RlmC (377 aa).

[4Fe-4S] cluster-binding residues include C3, C11, C14, and C87. Residues Q212, F241, E262, and N307 each coordinate S-adenosyl-L-methionine. The Nucleophile role is filled by C334.

The protein belongs to the class I-like SAM-binding methyltransferase superfamily. RNA M5U methyltransferase family. RlmC subfamily.

It carries out the reaction uridine(747) in 23S rRNA + S-adenosyl-L-methionine = 5-methyluridine(747) in 23S rRNA + S-adenosyl-L-homocysteine + H(+). Catalyzes the formation of 5-methyl-uridine at position 747 (m5U747) in 23S rRNA. This is 23S rRNA (uracil(747)-C(5))-methyltransferase RlmC from Edwardsiella ictaluri (strain 93-146).